Here is a 419-residue protein sequence, read N- to C-terminus: L-rhamnose isomerase (419 aa).

3 residues coordinate Mn(2+): His262, Asp294, and Asp296.

The protein belongs to the rhamnose isomerase family. As to quaternary structure, homotetramer. Requires Mn(2+) as cofactor.

It is found in the cytoplasm. The catalysed reaction is L-rhamnopyranose = L-rhamnulose. It functions in the pathway carbohydrate degradation; L-rhamnose degradation; glycerone phosphate from L-rhamnose: step 1/3. In terms of biological role, catalyzes the interconversion of L-rhamnose and L-rhamnulose. This is L-rhamnose isomerase from Escherichia coli (strain K12 / MC4100 / BW2952).